The following is a 1940-amino-acid chain: MSSDTEMEVFGIAAPFLRKSEKERIEAQNQPFDAKTYCFVVDSKEEYAKGKIKSSQDGKVTVETEDNRTLVVKPEDVYAMNPPKFDRIEDMAMLTHLNEPAVLYNLKDRYTSWMIYTYSGLFCVTVNPYKWLPVYNPEVVEGYRGKKRQEAPPHIFSISDNAYQFMLTDRENQSILITGESGAGKTVNTKRVIQYFATIAATGDLAKKKDSKMKGTLEDQIISANPLLEAFGNAKTVRNDNSSRFGKFIRIHFGTTGKLASADIETYLLEKSRVTFQLKAERSYHIFYQILSNKKPELIELLLITTNPYDYPFISQGEILVASIDDAEELLATDSAIDILGFTPEEKSGLYKLTGAVMHYGNMKFKQKQREEQAEPDGTEVADKTAYLMGLNSSDLLKALCFPRVKVGNEYVTKGQTVDQVHHAVNALSKSVYEKLFLWMVTRINQQLDTKLPRQHFIGVLDIAGFEIFEYNSLEQLCINFTNEKLQQFFNHHMFVLEQEEYKKEGIEWTFIDFGMDLAACIELIEKPMGIFSILEEECMFPKATDTSFKNKLYDQHLGKSNNFQKPKVVKGRAEAHFSLIHYAGTVDYSVSGWLEKNKDPLNETVVGLYQKSSNRLLAHLYATFATADADSGKKKVAKKKGSSFQTVSALFRENLNKLMSNLRTTHPHFVRCIIPNETKTPGAMEHSLVLHQLRCNGVLEGIRICRKGFPNRILYGDFKQRYRVLNASAIPEGQFIDSKKACEKLLASIDIDHTQYKFGHTKVFFKAGLLGTLEEMRDDRLAKLITRTQAVCRGFLMRVEFQKMVQRRESIFCIQYNIRSFMNVKHWPWMKLFFKIKPLLKSAETEKEMATMKEEFQKTKDELAKSEAKRKELEEKLVTLVQEKNDLQLQVQAESENLLDAEERCDQLIKAKFQLEAKIKEVTERAEDEEEINAELTAKKRKLEDECSELKKDIDDLELTLAKVEKEKHATENKVKNLTEELSGLDETIAKLTREKKALQEAHQQALDDLQAEEDKVNSLNKTKSKLEQQVEDLESSLEQEKKLRVDLERNKRKLEGDLKLAQESILDLENDKQQLDERLKKKDFEYCQLQSKVEDEQTLGLQFQKKIKELQARIEELEEEIEAERATRAKTEKQRSDYARELEELSERLEEAGGVTSTQIELNKKREAEFLKLRRDLEEATLQHEAMVAALRKKHADSVAELGEQIDNLQRVKQKLEKEKSEFKLEIDDLSSSMESVSKSKANLEKICRTLEDQLSEARGKNEEIQRSLSELTTQKSRLQTEAGELSRQLEEKESIVSQLSRSKQAFTQQTEELKRQLEEENKAKNALAHALQSSRHDCDLLREQYEEEQEGKAELQRALSKANSEVAQWRTKYETDAIQRTEELEEAKKKLAQRLQDSEEQVEAVNAKCASLEKTKQRLQGEVEDLMVDVERANSLAAALDKKQRNFDKVLAEWKTKCEESQAELEASLKESRSLSTELFKLKNAYEEALDQLETVKRENKNLEQEIADLTEQIAENGKTIHELEKSRKQIELEKADIQLALEEAEAALEHEEAKILRIQLELTQVKSEIDRKIAEKDEEIEQLKRNYQRTVETMQSALDAEVRSRNEAIRLKKKMEGDLNEIEIQLSHANRQAAETLKHLRSVQGQLKDTQLHLDDALRGQEDLKEQLAIVERRANLLQAEVEELRATLEQTERARKLAEQELLDSNERVQLLHTQNTSLIHTKKKLETDLMQLQSEVEDASRDARNAEEKAKKAITDAAMMAEELKKEQDTSAHLERMKKNLEQTVKDLQHRLDEAEQLALKGGKKQIQKLETRIRELEFELEGEQKKNTESVKGLRKYERRVKELTYQSEEDRKNVLRLQDLVDKLQVKVKSYKRQAEEADEQANAHLTKFRKAQHELEEAEERADIAESQVNKLRAKTRDFTSSRMVVHESEE.

A Myosin N-terminal SH3-like domain is found at 33–82 (DAKTYCFVVDSKEEYAKGKIKSSQDGKVTVETEDNRTLVVKPEDVYAMNP). The Myosin motor domain occupies 86-779 (DRIEDMAMLT…LLGTLEEMRD (694 aa)). Lysine 130 bears the N6,N6,N6-trimethyllysine mark. ATP is bound at residue 179 to 186 (GESGAGKT). Actin-binding stretches follow at residues 656–678 (LNKLMSNLRTTHPHFVRCIIPNE) and 758–772 (KFGHTKVFFKAGLLG). Residues 782–811 (LAKLITRTQAVCRGFLMRVEFQKMVQRRES) form the IQ domain. A coiled-coil region spans residues 840–1933 (LLKSAETEKE…KTRDFTSSRM (1094 aa)).

Belongs to the TRAFAC class myosin-kinesin ATPase superfamily. Myosin family. In terms of assembly, muscle myosin is a hexameric protein that consists of 2 heavy chain subunits (MHC), 2 alkali light chain subunits (MLC) and 2 regulatory light chain subunits (MLC-2). In terms of tissue distribution, expressed in fetal bone, thymus, placenta, heart, brain, and liver.

Its subcellular location is the cytoplasm. The protein resides in the myofibril. Muscle contraction. This Homo sapiens (Human) protein is Myosin-3 (MYH3).